The sequence spans 159 residues: Phosphopantetheine adenylyltransferase (159 aa).

His16 contacts ATP. Substrate is bound by residues Lys40, Met72, and Arg86. ATP contacts are provided by residues 87-89 (GLR), Glu97, and 122-128 (YQYLSAS).

This sequence belongs to the bacterial CoaD family. As to quaternary structure, homohexamer. Mg(2+) is required as a cofactor.

It is found in the cytoplasm. The catalysed reaction is (R)-4'-phosphopantetheine + ATP + H(+) = 3'-dephospho-CoA + diphosphate. Its pathway is cofactor biosynthesis; coenzyme A biosynthesis; CoA from (R)-pantothenate: step 4/5. Its function is as follows. Reversibly transfers an adenylyl group from ATP to 4'-phosphopantetheine, yielding dephospho-CoA (dPCoA) and pyrophosphate. The sequence is that of Phosphopantetheine adenylyltransferase from Dehalococcoides mccartyi (strain ATCC BAA-2100 / JCM 16839 / KCTC 5957 / BAV1).